Reading from the N-terminus, the 711-residue chain is Ribosomal RNA large subunit methyltransferase K/L (711 aa).

The THUMP domain maps to 43-154 (TLYRTLLWSR…RENLVISLDL (112 aa)).

The protein belongs to the methyltransferase superfamily. RlmKL family.

The protein resides in the cytoplasm. The enzyme catalyses guanosine(2445) in 23S rRNA + S-adenosyl-L-methionine = N(2)-methylguanosine(2445) in 23S rRNA + S-adenosyl-L-homocysteine + H(+). It catalyses the reaction guanosine(2069) in 23S rRNA + S-adenosyl-L-methionine = N(2)-methylguanosine(2069) in 23S rRNA + S-adenosyl-L-homocysteine + H(+). Specifically methylates the guanine in position 2445 (m2G2445) and the guanine in position 2069 (m7G2069) of 23S rRNA. The sequence is that of Ribosomal RNA large subunit methyltransferase K/L from Haemophilus influenzae (strain PittEE).